The sequence spans 203 residues: Protein S40-6 (203 aa).

The tract at residues 1–33 is disordered; that stretch reads MAKGRKPTTMNRSDRYLGSYTYGDSHGNSVTDE.

Belongs to the senescence regulator S40 family.

The protein localises to the cytoplasm. This is Protein S40-6 from Arabidopsis thaliana (Mouse-ear cress).